The following is a 1507-amino-acid chain: Nonribosomal peptide synthetase ataP (1507 aa).

In terms of domain architecture, Carrier 1 spans 1–72 (MQINIRNEIA…DIISRSTGMY (72 aa)). Residue S33 is modified to O-(pantetheine 4'-phosphoryl)serine. The disordered stretch occupies residues 98-119 (TPSPSPSGPSTGCPTPDTLDTT). Low complexity predominate over residues 105–115 (GPSTGCPTPDT). Residues 163–429 (TRMAWQQVLE…NRVFRQLVQL (267 aa)) form a condensation 1 region. Residues 514-893 (AAAENPEACA…GRNDRQIKLR (380 aa)) are adenylation. In terms of domain architecture, Carrier 2 spans 988 to 1065 (NEMSPTEQRV…DLSQRIDKLQ (78 aa)). S1025 is subject to O-(pantetheine 4'-phosphoryl)serine. Positions 1099–1471 (TSNTSFTVSF…MTALRLLIKN (373 aa)) are condensation 2.

The protein belongs to the NRP synthetase family.

It participates in mycotoxin biosynthesis. Functionally, nonribosomal peptide synthetase; part of the gene cluster that mediates the biosynthesis of acetylaranotin, a member of the epipolythiodioxopiperazine (ETP) class of toxins characterized by a disulfide-bridged cyclic dipeptide. The first step of acetylaranotin biosynthesis is performed by the NRPS ataP which produces diketopiperazine cyclo-L-Phe-L-Phe via the condensation of 2 phenylalanines (L-Phe). The ataC domain of ataTC then catalyzes the formation of bishydroxylation of cyclo-L-Phe-L-Phe. The glutathione S-transferase domain ataG in ataIMG further catalyzes the conjugation of two glutathiones to the bishydroxylated intermediate. Next, the dipeptidase ataJ removes the Glu residues. The following step is performed by the carbon sulfur lyase domain ataI of ataIMG which may convert the bis-cysteinyl adduct to yield an epidithiol intermediate. The ataT domain from ataTC then catalyzes the oxidation of the free dithiols, followed by a cyclization step catalyzed by the cytochrome P450 ataF. AtaF probably acts as an epoxidase to promote a dual epoxidation formation at C8 and C9 along with C8' and C9', followed by the spontaneous nucleophilic attack of the amide nitrogens N10 and N10' to yield an intermediate with the pyrrolidine partial structure. The final steps of acetylaranotin biosynthesis involve the acetylation and ring rearrangement of an epitetrathiodiketopiperazine intermediate to produce acetylaranotin. AtaH probably catalyzes the acetylation of epitetrathiodiketopiperazine to produce a diacetate and ataY is responsible for the formation of the dihydrooxepin moiety that converts the diacetate intermediate to acetylaranotin via acetylapoaranotin. Both enzymes could function independently in the absence of the other. The acetylaranotin bis-thiomethyltransferase ataS located outside of acetylaranotin gene cluster is the main thiomethyltransferase responsible for converting acetylaranotin and its related intermediates to their methylated forms. This is Nonribosomal peptide synthetase ataP from Aspergillus terreus (strain NIH 2624 / FGSC A1156).